We begin with the raw amino-acid sequence, 129 residues long: Gem-associated protein 7 (129 aa).

At Met1 the chain carries N-acetylmethionine. The SUZ-C domain occupies 1 to 31 (MQSPLTIPVPVPVLRLPRGPDGFSRGFASDG). In terms of domain architecture, Sm spans 63–129 (RYLRSLLAMV…SDIISYSFKL (67 aa)).

Belongs to the gemin-7 family. In terms of assembly, part of the core SMN complex that contains SMN1, GEMIN2/SIP1, DDX20/GEMIN3, GEMIN4, GEMIN5, GEMIN6, GEMIN7, GEMIN8 and STRAP/UNRIP. Part of the SMN-Sm complex that contains SMN1, GEMIN2/SIP1, DDX20/GEMIN3, GEMIN4, GEMIN5, GEMIN6, GEMIN7, GEMIN8, STRAP/UNRIP and the Sm proteins SNRPB, SNRPD1, SNRPD2, SNRPD3, SNRPE, SNRPF and SNRPG. Interacts with GEMIN6; the interaction is direct. Interacts with STRAP/UNRIP; the interaction is direct. Interacts with GEMIN8; the interaction is direct. Interacts with SNRPB, SNRPD2, SNRPD3 and SNRPE; the interaction is direct.

It is found in the nucleus. Its subcellular location is the nucleoplasm. The protein resides in the gem. It localises to the cytoplasm. Functionally, the SMN complex catalyzes the assembly of small nuclear ribonucleoproteins (snRNPs), the building blocks of the spliceosome, and thereby plays an important role in the splicing of cellular pre-mRNAs. Most spliceosomal snRNPs contain a common set of Sm proteins SNRPB, SNRPD1, SNRPD2, SNRPD3, SNRPE, SNRPF and SNRPG that assemble in a heptameric protein ring on the Sm site of the small nuclear RNA to form the core snRNP (Sm core). In the cytosol, the Sm proteins SNRPD1, SNRPD2, SNRPE, SNRPF and SNRPG are trapped in an inactive 6S pICln-Sm complex by the chaperone CLNS1A that controls the assembly of the core snRNP. To assemble core snRNPs, the SMN complex accepts the trapped 5Sm proteins from CLNS1A forming an intermediate. Binding of snRNA inside 5Sm triggers eviction of the SMN complex, thereby allowing binding of SNRPD3 and SNRPB to complete assembly of the core snRNP. The sequence is that of Gem-associated protein 7 (Gemin7) from Mus musculus (Mouse).